A 528-amino-acid chain; its full sequence is Chaperonin GroEL, chloroplastic (528 aa).

ATP-binding positions include 29 to 32 (TLGP), 86 to 90 (DGTTT), glycine 414, 480 to 482 (DAA), and aspartate 496.

It belongs to the chaperonin (HSP60) family. As to quaternary structure, forms a cylinder of 14 subunits composed of two heptameric rings stacked back-to-back. Interacts with the co-chaperonin GroES.

Its subcellular location is the plastid. The protein resides in the chloroplast. The catalysed reaction is ATP + H2O + a folded polypeptide = ADP + phosphate + an unfolded polypeptide.. Together with its co-chaperonin GroES, plays an essential role in assisting protein folding. The GroEL-GroES system forms a nano-cage that allows encapsulation of the non-native substrate proteins and provides a physical environment optimized to promote and accelerate protein folding. The protein is Chaperonin GroEL, chloroplastic of Pyropia yezoensis (Susabi-nori).